Consider the following 423-residue polypeptide: Protein disulfide isomerase-like 5-2 (423 aa).

Positions 1-35 are cleaved as a signal peptide; the sequence is MAATTTRPLPLLLLLLLPPLLLLLLSFHAAAAAAA. In terms of domain architecture, Thioredoxin spans 36 to 149; the sequence is EEFPRDGRVI…LVRNLNKFVA (114 aa). Catalysis depends on nucleophile residues cysteine 71 and cysteine 74. Cysteines 71 and 74 form a disulfide. N-linked (GlcNAc...) asparagine glycosylation is present at asparagine 181. Residues 386–406 form a helical membrane-spanning segment; it reads LVSLNSLYILICVFALLGVMI.

This sequence belongs to the protein disulfide isomerase family.

The protein resides in the membrane. In terms of biological role, acts as a protein-folding catalyst that interacts with nascent polypeptides to catalyze the formation, isomerization, and reduction or oxidation of disulfide bonds. May play a role in storage protein biogenesis. This is Protein disulfide isomerase-like 5-2 (PDIL5-2) from Oryza sativa subsp. japonica (Rice).